The following is a 312-amino-acid chain: Apolipoprotein E (312 aa).

Positions 1–18 (MKALWAVLLATLLTGCLA) are cleaved as a signal peptide. 8 repeat units span residues 72–93 (VLMEDTMTEVKAYKKELEEQLG), 94–115 (PVAEETRARLAKEVQAAQARLG), 116–137 (ADMEDLRNRLGQYRNEVHTMLG), 138–159 (QNTEELRSRLSTHLRKMRKRLM), 160–181 (RDAEDLQKRLAVYKAGAREGAE), 182–203 (RGVSAIRERLGPLVEQGRQRTA), 204–225 (NLGAGAAQPLRDRAQALSERLR), and 226–247 (GRLEEVGNQARDRLEEMREHME). The tract at residues 72-247 (VLMEDTMTEV…RLEEMREHME (176 aa)) is 8 X 22 AA approximate tandem repeats. Methionine 135 is subject to Methionine sulfoxide. Residues 150 to 160 (HLRKMRKRLMR) are LDL and other lipoprotein receptors binding. The segment at 150 to 160 (HLRKMRKRLMR) is LDL receptor binding. 154–157 (MRKR) contributes to the heparin binding site. The interval 202–282 (TANLGAGAAQ…SWFEPLVEDM (81 aa)) is lipid-binding and lipoprotein association. 221-228 (SERLRGRL) contributes to the heparin binding site. Residues 258-312 (QQIRLQAEIFQARLKSWFEPLVEDMHRQLANLVEKIQSSVATNSVLSTSVPQENQ) form a homooligomerization region. The segment at 270–282 (RLKSWFEPLVEDM) is specificity for association with VLDL.

The protein belongs to the apolipoprotein A1/A4/E family. In terms of assembly, homotetramer. May interact with ABCA1; functionally associated with ABCA1 in the biogenesis of HDLs. May interact with APP/A4 amyloid-beta peptide; the interaction is extremely stable in vitro but its physiological significance is unclear. May interact with MAPT. May interact with MAP2. In the cerebrospinal fluid, interacts with secreted SORL1. Interacts with PMEL; this allows the loading of PMEL luminal fragment on ILVs to induce fibril nucleation. In terms of processing, APOE exists as multiple glycosylated and sialylated glycoforms within cells and in plasma. The extent of glycosylation and sialylation are tissue and context specific. Glycated in plasma VLDL. Post-translationally, phosphorylated by FAM20C in the extracellular medium.

The protein resides in the secreted. It is found in the extracellular space. It localises to the extracellular matrix. The protein localises to the extracellular vesicle. Its subcellular location is the endosome. The protein resides in the multivesicular body. Functionally, APOE is an apolipoprotein, a protein associating with lipid particles, that mainly functions in lipoprotein-mediated lipid transport between organs via the plasma and interstitial fluids. APOE is a core component of plasma lipoproteins and is involved in their production, conversion and clearance. Apolipoproteins are amphipathic molecules that interact both with lipids of the lipoprotein particle core and the aqueous environment of the plasma. As such, APOE associates with chylomicrons, chylomicron remnants, very low density lipoproteins (VLDL) and intermediate density lipoproteins (IDL) but shows a preferential binding to high-density lipoproteins (HDL). It also binds a wide range of cellular receptors including the LDL receptor/LDLR, the LDL receptor-related proteins LRP1, LRP2 and LRP8 and the very low-density lipoprotein receptor/VLDLR that mediate the cellular uptake of the APOE-containing lipoprotein particles. Finally, APOE also has a heparin-binding activity and binds heparan-sulfate proteoglycans on the surface of cells, a property that supports the capture and the receptor-mediated uptake of APOE-containing lipoproteins by cells. A main function of APOE is to mediate lipoprotein clearance through the uptake of chylomicrons, VLDLs, and HDLs by hepatocytes. APOE is also involved in the biosynthesis by the liver of VLDLs as well as their uptake by peripheral tissues ensuring the delivery of triglycerides and energy storage in muscle, heart and adipose tissues. By participating in the lipoprotein-mediated distribution of lipids among tissues, APOE plays a critical role in plasma and tissues lipid homeostasis. APOE is also involved in two steps of reverse cholesterol transport, the HDLs-mediated transport of cholesterol from peripheral tissues to the liver, and thereby plays an important role in cholesterol homeostasis. First, it is functionally associated with ABCA1 in the biogenesis of HDLs in tissues. Second, it is enriched in circulating HDLs and mediates their uptake by hepatocytes. APOE also plays an important role in lipid transport in the central nervous system, regulating neuron survival and sprouting. This Arvicanthis niloticus (African grass rat) protein is Apolipoprotein E (Apoe).